We begin with the raw amino-acid sequence, 593 residues long: Chromodomain Y-like protein (593 aa).

Residues 1–14 (MGIGNSQPNSQEAQ) are compositionally biased toward polar residues. The tract at residues 1 to 30 (MGIGNSQPNSQEAQLCTLPEKAEQPTDDNT) is disordered. The Chromo domain occupies 56 to 116 (TQVESIVDKR…RHNERQKEGS (61 aa)). An interaction with EZH2 region spans residues 56–304 (TQVESIVDKR…TIQTSVTGVT (249 aa)). At S83 the chain carries Phosphoserine. Positions 110–158 (ERQKEGSLARASRASPSNARKQISRSTHSTLSKTNSKALVVGKDHESKS) are disordered. Low complexity predominate over residues 117–129 (LARASRASPSNAR). N6,N6,N6-trimethyllysine; by EHMT2; alternate is present on K130. K130 is subject to N6,N6-dimethyllysine; by EHMT2; alternate. K130 bears the N6-methyllysine; by EHMT2; alternate mark. Residues 133–146 (SRSTHSTLSKTNSK) show a composition bias toward polar residues. Residues S165, S196, and S211 each carry the phosphoserine modification. The tract at residues 200–223 (GRTSVDGFQGESPEKLDPVDQGAE) is disordered. The acetyl-CoA-binding domain stretch occupies residues 357-589 (SENNSLNPEV…DSMLKYLQRK (233 aa)).

In terms of assembly, forms multimers and multimerization is required for stable binding to chromatin. Interacts with HDAC1 and HDAC2 via its C-terminal acetyl-CoA-binding domain. Interacts with EZH2, EED, SUZ12, REST, EHMT1 and EHMT2. Part of a complex containing at least CDYL, REST, WIZ, SETB1, EHMT1 and EHMT2. Part of a complex containing at least CDYL, MIER1, MIER2, HDAC1 and HDAC2. Interacts with CHAF1A and CHAF1B; bridging the CAF-1 complex to the MCM2-7 (MCM) complex. Interacts with MCM3 and MCM5; bridging the CAF-1 complex to the MCM2-7 (MCM) complex. Interacts with EHMT2 and PRDM9; interaction only takes place when PRDM9 is bound to hotspot DNA. In terms of tissue distribution, highly expressed in testis (at protein level). Expressed in the hippocampus (at protein level). Expressed in the medial prefrontal cortex, prelimbic cortex, intralimbic cortex and cingulate cortex area (at protein level). Isoform 1: Expressed as 2 transcripts encoding the same protein, a ubiquitous transcript and a highly expressed testis-specific transcript.

The protein resides in the nucleus. It is found in the chromosome. It catalyses the reaction L-lysyl-[protein] + acetyl-CoA = N(6)-acetyl-L-lysyl-[protein] + CoA + H(+). The enzyme catalyses 3-hydroxybutanoyl-CoA = (2E)-butenoyl-CoA + H2O. Chromatin reader protein that recognizes and binds histone H3 trimethylated at 'Lys-9', dimethylated at 'Lys-27' and trimethylated at 'Lys-27' (H3K9me3, H3K27me2 and H3K27me3, respectively). Part of multimeric repressive chromatin complexes, where it is required for transmission and restoration of repressive histone marks, thereby preserving the epigenetic landscape. Required for chromatin targeting and maximal enzymatic activity of Polycomb repressive complex 2 (PRC2); acts as a positive regulator of PRC2 activity by bridging the pre-existing histone H3K27me3 and newly recruited PRC2 on neighboring nucleosomes. Acts as a corepressor for REST by facilitating histone-lysine N-methyltransferase EHMT2 recruitment and H3K9 dimethylation at REST target genes for repression. Involved in X chromosome inactivation in females: recruited to Xist RNA-coated X chromosome and facilitates propagation of H3K9me2 by anchoring EHMT2. Promotes EZH2 accumulation and H3K27me3 methylation at DNA double strand breaks (DSBs), thereby facilitating transcriptional repression at sites of DNA damage and homology-directed repair of DSBs. Required for neuronal migration during brain development by repressing expression of RHOA. By repressing the expression of SCN8A, contributes to the inhibition of intrinsic neuronal excitability and epileptogenesis. In addition to acting as a chromatin reader, acts as a hydro-lyase. Shows crotonyl-coA hydratase activity by mediating the conversion of crotonyl-CoA ((2E)-butenoyl-CoA) to beta-hydroxybutyryl-CoA (3-hydroxybutanoyl-CoA), thereby acting as a negative regulator of histone crotonylation. Histone crotonylation is required during spermatogenesis; down-regulation of histone crotonylation by CDYL regulates the reactivation of sex chromosome-linked genes in round spermatids and histone replacement in elongating spermatids. By regulating histone crotonylation and trimethylation of H3K27, may be involved in stress-induced depression-like behaviors, possibly by regulating VGF expression. May have histone acetyltransferase activity; such activity is however unsure in vivo. Functionally, not able to recognize and bind histone H3K9me3, histone H3K27me2 and histone H3K27me3, due to the presence of a N-terminal extension that inactivates the chromo domain. The sequence is that of Chromodomain Y-like protein from Mus musculus (Mouse).